A 363-amino-acid polypeptide reads, in one-letter code: Protein-glutamate methylesterase/protein-glutamine glutaminase 2 (363 aa).

Positions 7–124 constitute a Response regulatory domain; it reads RVLVVDDSAL…SLTLENVADE (118 aa). Asp58 is modified (4-aspartylphosphate). The region spanning 160-357 is the CheB-type methylesterase domain; that stretch reads PVASRTTPSK…NLLMVQSAAQ (198 aa). Residues Ser176, His203, and Asp299 contribute to the active site.

This sequence belongs to the CheB family. In terms of processing, phosphorylated by CheA. Phosphorylation of the N-terminal regulatory domain activates the methylesterase activity.

It localises to the cytoplasm. The enzyme catalyses [protein]-L-glutamate 5-O-methyl ester + H2O = L-glutamyl-[protein] + methanol + H(+). The catalysed reaction is L-glutaminyl-[protein] + H2O = L-glutamyl-[protein] + NH4(+). Its function is as follows. Involved in chemotaxis. Part of a chemotaxis signal transduction system that modulates chemotaxis in response to various stimuli. Catalyzes the demethylation of specific methylglutamate residues introduced into the chemoreceptors (methyl-accepting chemotaxis proteins or MCP) by CheR. Also mediates the irreversible deamidation of specific glutamine residues to glutamic acid. The polypeptide is Protein-glutamate methylesterase/protein-glutamine glutaminase 2 (Koribacter versatilis (strain Ellin345)).